The chain runs to 430 residues: Histidine--tRNA ligase (430 aa).

Belongs to the class-II aminoacyl-tRNA synthetase family. As to quaternary structure, homodimer.

The protein resides in the cytoplasm. It carries out the reaction tRNA(His) + L-histidine + ATP = L-histidyl-tRNA(His) + AMP + diphosphate + H(+). In Chlamydia abortus (strain DSM 27085 / S26/3) (Chlamydophila abortus), this protein is Histidine--tRNA ligase.